The following is a 299-amino-acid chain: GDNF family receptor alpha-4 (299 aa).

The first 20 residues, M1–S20, serve as a signal peptide directing secretion. Residues R145–G198 are disordered. Over residues L177–G198 the composition is skewed to low complexity. N208 carries an N-linked (GlcNAc...) asparagine glycan. Residue G278 is the site of GPI-anchor amidated glycine attachment. Positions R279 to L299 are cleaved as a propeptide — removed in mature form.

This sequence belongs to the GDNFR family. As to quaternary structure, interacts with ARTN ligand and RET: forms a 2:2:2 ternary complex composed of ARTN ligand, GFRA3 and RET receptor. Interacts with SORL1. Predominantly expressed in the adult thyroid gland. Low levels also found in fetal adrenal and thyroid glands.

It localises to the cell membrane. The protein resides in the secreted. Its function is as follows. Receptor for persephin (PSPN), a growth factor that exhibits neurotrophic activity on mesencephalic dopaminergic and motor neurons. Acts by binding to its coreceptor, GFRA4, leading to autophosphorylation and activation of the RET receptor. May be important in C-cell development and, in the postnatal development of the adrenal medulla. The polypeptide is GDNF family receptor alpha-4 (GFRA4) (Homo sapiens (Human)).